An 809-amino-acid chain; its full sequence is Sucrose synthase 2 (809 aa).

The tract at residues 278 to 756 (MVFNVVILSP…GLQRIYERYT (479 aa)) is GT-B glycosyltransferase.

It belongs to the glycosyltransferase 1 family. Plant sucrose synthase subfamily.

It carries out the reaction an NDP-alpha-D-glucose + D-fructose = a ribonucleoside 5'-diphosphate + sucrose + H(+). In terms of biological role, sucrose-cleaving enzyme that provides UDP-glucose and fructose for various metabolic pathways. In Pisum sativum (Garden pea), this protein is Sucrose synthase 2 (SUS2).